A 199-amino-acid polypeptide reads, in one-letter code: Gene 66 protein (199 aa).

This is Gene 66 protein (66) from Mycobacterium (Mycobacteriophage D29).